The primary structure comprises 296 residues: Nucleotide-binding protein MGAS2096_Spy0550 (296 aa).

13 to 20 (GMSGAGKT) provides a ligand contact to ATP. GTP is bound at residue 63–66 (DMRS).

It belongs to the RapZ-like family.

Its function is as follows. Displays ATPase and GTPase activities. The sequence is that of Nucleotide-binding protein MGAS2096_Spy0550 from Streptococcus pyogenes serotype M12 (strain MGAS2096).